A 547-amino-acid polypeptide reads, in one-letter code: Cilia- and flagella- associated protein 210 (547 aa).

A coiled-coil region spans residues 184 to 254; the sequence is KLNVEKAFKE…EIEMKKKQGK (71 aa). The disordered stretch occupies residues 210-237; that stretch reads KDHLKQIKEHEEEEERRRKEEEKDAEEI.

Microtubule inner protein component of sperm flagellar doublet microtubules. In terms of tissue distribution, expressed in trachea multiciliated cells.

It is found in the cytoplasm. Its subcellular location is the cytoskeleton. The protein resides in the cilium axoneme. It localises to the flagellum axoneme. In terms of biological role, microtubule inner protein (MIP) part of the dynein-decorated doublet microtubules (DMTs) in cilia axoneme, which is required for motile cilia beating. The protein is Cilia- and flagella- associated protein 210 (CFAP210) of Bos taurus (Bovine).